Here is a 74-residue protein sequence, read N- to C-terminus: Acyl carrier protein (74 aa).

The 73-residue stretch at 1-73 (MAVFEKVQEI…DLVAYVEEQA (73 aa)) folds into the Carrier domain. The residue at position 35 (Ser35) is an O-(pantetheine 4'-phosphoryl)serine.

Belongs to the acyl carrier protein (ACP) family. In terms of processing, 4'-phosphopantetheine is transferred from CoA to a specific serine of apo-ACP by AcpS. This modification is essential for activity because fatty acids are bound in thioester linkage to the sulfhydryl of the prosthetic group.

The protein localises to the cytoplasm. Its pathway is lipid metabolism; fatty acid biosynthesis. Its function is as follows. Carrier of the growing fatty acid chain in fatty acid biosynthesis. In Streptococcus pneumoniae serotype 4 (strain ATCC BAA-334 / TIGR4), this protein is Acyl carrier protein.